We begin with the raw amino-acid sequence, 66 residues long: Large ribosomal subunit protein bL35 (66 aa).

Composition is skewed to basic residues over residues 1–16 (MPKMKTHRGAAKRVKR) and 38–49 (TKQKRQLRKARL). The disordered stretch occupies residues 1-49 (MPKMKTHRGAAKRVKRTASGQLKRSRAFTSHLFANKSTKQKRQLRKARL).

The protein belongs to the bacterial ribosomal protein bL35 family.

This chain is Large ribosomal subunit protein bL35, found in Staphylococcus aureus (strain MSSA476).